We begin with the raw amino-acid sequence, 359 residues long: 4-galactosyl-N-acetylglucosaminide 3-alpha-L-fucosyltransferase FUT6 (359 aa).

The Cytoplasmic segment spans residues methionine 1 to arginine 14. Residues cysteine 15 to leucine 34 traverse the membrane as a helical; Signal-anchor for type II membrane protein segment. Over arginine 35–threonine 359 the chain is Lumenal. N-linked (GlcNAc...) asparagine glycosylation is found at asparagine 46, asparagine 91, asparagine 153, and asparagine 184. Positions lysine 73–valine 112 are determines site-specific fucosylation.

Belongs to the glycosyltransferase 10 family. Homodimer and monomer. Monomer (secreted form). N-glycosylated. Post-translationally, proteolytic cleavage releases a secreted glycoform of 43 kDa. In terms of tissue distribution, kidney, liver, colon, small intestine, bladder, uterus and salivary gland.

It localises to the golgi apparatus. The protein localises to the golgi stack membrane. The protein resides in the secreted. The catalysed reaction is a beta-D-galactosyl-(1-&gt;4)-N-acetyl-beta-D-glucosaminyl derivative + GDP-beta-L-fucose = a beta-D-galactosyl-(1-&gt;4)-[alpha-L-fucosyl-(1-&gt;3)]-N-acetyl-beta-D-glucosaminyl derivative + GDP + H(+). The enzyme catalyses an N-acetyl-alpha-neuraminyl-(2-&gt;3)-beta-D-galactosyl-(1-&gt;4)-N-acetyl-beta-D-glucosaminyl derivative + GDP-beta-L-fucose = an alpha-Neu5Ac-(2-&gt;3)-beta-D-Gal-(1-&gt;4)-[alpha-L-Fuc-(1-&gt;3)]-beta-D-GlcNAc derivative + GDP + H(+). It catalyses the reaction an alpha-Neu5Ac-(2-&gt;3)-beta-D-Gal-(1-&gt;4)-beta-D-GlcNAc-(1-&gt;3)-beta-D-Gal-(1-&gt;4)-[alpha-L-Fuc-(1-&gt;3)]-beta-D-GlcNAc derivative + GDP-beta-L-fucose = an alpha-Neu5Ac-(2-&gt;3)-beta-D-Gal-(1-&gt;4)-[alpha-L-Fuc-(1-&gt;3)]-beta-D-GlcNAc-(1-&gt;3)-beta-D-Gal-(1-&gt;4)-[alpha-L-Fuc-(1-&gt;3)]-beta-D-GlcNAc derivative + GDP + H(+). It carries out the reaction a neolactoside nLc6Cer + GDP-beta-L-fucose = beta-D-Gal-(1-&gt;4)-[alpha-L-Fuc-(1-&gt;3)]-beta-D-GlcNAc-(1-&gt;3)-beta-D-Gal-(1-&gt;4)-beta-D-GlcNAc-(1-&gt;3)-beta-D-Gal-(1-&gt;4)-beta-D-Glc-(1&lt;-&gt;1')-Cer + GDP + H(+). The catalysed reaction is a neolactoside nLc6Cer + GDP-beta-L-fucose = beta-D-galactosyl-(1-&gt;4)-N-acetyl-beta-D-glucosaminyl-(1-&gt;3)-beta-D-galactosyl-(1-&gt;4)-[alpha-L-fucosyl-(1-&gt;3)]-N-acetyl-beta-D-glucosaminyl-(1-&gt;3)-beta-D-galactosyl-(1-&gt;4)-beta-D-glucosyl-(1&lt;-&gt;1')-ceramide + GDP + H(+). The enzyme catalyses a neolactoside VI(3)-alpha-NeuNAc-nLc6Cer + GDP-beta-L-fucose = a neolactoside VI(3)-alpha-NeuAc,V(3)-alphaFuc-nLc6Cer + GDP + H(+). It catalyses the reaction beta-D-galactosyl-(1-&gt;4)-N-acetyl-D-glucosamine + GDP-beta-L-fucose = beta-D-galactosyl-(1-&gt;4)-[alpha-L-fucosyl-(1-&gt;3)]-N-acetyl-D-glucosamine + GDP + H(+). It carries out the reaction N-acetyl-alpha-neuraminosyl-(2-&gt;3)-beta-D-galactosyl-(1-&gt;4)-N-acetyl-beta-D-glucosamine + GDP-beta-L-fucose = N-acetyl-alpha-neuraminosyl-(2-&gt;3)-beta-D-galactosyl-(1-&gt;4)-[alpha-L-fucosyl-(1-&gt;3)]-N-acetyl-beta-D-glucosamine + GDP + H(+). The catalysed reaction is lactose + GDP-beta-L-fucose = beta-D-galactosyl-(1-&gt;4)-[alpha-L-fucosyl-(1-&gt;3)]-D-glucose + GDP + H(+). The enzyme catalyses alpha-L-Fuc-(1-&gt;2)-beta-D-Gal-(1-&gt;4)-D-Glc + GDP-beta-L-fucose = alpha-L-Fuc-(1-&gt;2)-beta-D-Gal-(1-&gt;4)-[alpha-L-Fuc-(1-&gt;3)]-D-Glc + GDP + H(+). It catalyses the reaction a beta-D-galactosyl-(1-&gt;4)-N-acetyl-beta-D-6-sulfooxy-glucosaminyl derivative + GDP-beta-L-fucose = a beta-D-galactosyl-(1-&gt;4)-[alpha-L-fucosyl-(1-&gt;3)]-N-acetyl-beta-D-6-sulfooxy-glucosaminyl derivative + GDP + H(+). The protein operates within protein modification; protein glycosylation. Its function is as follows. Catalyzes the transfer of L-fucose, from a guanosine diphosphate-beta-L-fucose, to the N-acetyl glucosamine (GlcNAc) of a distal alpha2,3 sialylated lactosamine unit of a glycoprotein- or a glycolipid-linked sialopolylactosamines chain or of a distal or internal lactosamine unit of a neutral glycoprotein- or a glycolipid-linked polylactosamines chain through an alpha-1,3 glycosidic linkage and participates in surface expression of the sialyl Lewis X (sLe(x)), Lewis X (Le(x)) and non sialylated VIM2 determinants. Moreover transfers fucose to H-type 2 (Fucalpha1-2Galbeta1-4GlcNAc) chain acceptor substrates and participates in difucosylated sialyl Lewis x determinants. Also fucosylates a polylactosamine substrate having a 6 sulfate modification at the GlcNAc moiety and gives rise to sialyl and non-sialyl 6-sulfo lewis X. Does not have activity towards type 1 ((Galbeta1-3GlcNAc)) and H-type 1 chain (Fucalpha1-2Galbeta1-3GlcNAc) acceptors substrates. In terms of biological role, does not have alpha(1,3)-fucosyltransferase activity. The polypeptide is 4-galactosyl-N-acetylglucosaminide 3-alpha-L-fucosyltransferase FUT6 (Homo sapiens (Human)).